Consider the following 1601-residue polypeptide: Rap guanine nucleotide exchange factor 6 (1601 aa).

Position 1 is an N-acetylmethionine (Met1). Disordered regions lie at residues 1–22 and 179–250; these read MNSP…ERTP and PHPQ…QGRD. Ser3 carries the phosphoserine modification. The span at 187–205 shows a compositional bias: low complexity; sequence SSSQSGCSIASDSGSSSLS. Positions 228–241 are enriched in acidic residues; it reads VDSEDDEEEDEEID. 280 to 399 provides a ligand contact to a nucleoside 3',5'-cyclic phosphate; that stretch reads AFANMTMSVR…VEEEGEIVMV (120 aa). The 115-residue stretch at 412–526 folds into the N-terminal Ras-GEF domain; sequence KGHIVIKATP…LLNIACAAKA (115 aa). The 86-residue stretch at 530-615 folds into the PDZ domain; the sequence is QVVLQKASRE…LTVKTNIFVF (86 aa). Positions 749–835 constitute a Ras-associating domain; the sequence is PDQVIRVFKV…GRYYLKNNME (87 aa). A Ras-GEF domain is found at 860–1088; sequence STIEVATQLS…LDVQGGAHKK (229 aa). Disordered stretches follow at residues 1192–1274, 1302–1324, 1455–1478, and 1571–1601; these read IRKK…SRSS, ESTG…QHGP, LEST…VYKT, and QRHN…VSAV. Low complexity-rich tracts occupy residues 1229–1238 and 1255–1274; these read SVASSLHSSP and SAKS…SRSS. Over residues 1586 to 1601 the composition is skewed to acidic residues; sequence TDADSEADENEQVSAV.

Interacts with the second PDZ domain of human PTP1e. In terms of tissue distribution, isoform 3 has highest expression levels in the brain, heart, liver, lung and placenta and is barely detectable in skeletal muscle, kidney and pancreas.

It is found in the cytoplasm. Its subcellular location is the cell membrane. Its function is as follows. Guanine nucleotide exchange factor (GEF) for Rap1A, Rap2A and M-Ras GTPases. Does not interact with cAMP. This chain is Rap guanine nucleotide exchange factor 6 (RAPGEF6), found in Homo sapiens (Human).